Here is a 419-residue protein sequence, read N- to C-terminus: UDP-N-acetylglucosamine 1-carboxyvinyltransferase (419 aa).

22–23 (KN) is a phosphoenolpyruvate binding site. Arg92 is a UDP-N-acetyl-alpha-D-glucosamine binding site. Cys116 serves as the catalytic Proton donor. The residue at position 116 (Cys116) is a 2-(S-cysteinyl)pyruvic acid O-phosphothioketal. UDP-N-acetyl-alpha-D-glucosamine-binding positions include 121–125 (RPIDL), Asp306, and Ile328.

The protein belongs to the EPSP synthase family. MurA subfamily.

Its subcellular location is the cytoplasm. It catalyses the reaction phosphoenolpyruvate + UDP-N-acetyl-alpha-D-glucosamine = UDP-N-acetyl-3-O-(1-carboxyvinyl)-alpha-D-glucosamine + phosphate. It participates in cell wall biogenesis; peptidoglycan biosynthesis. In terms of biological role, cell wall formation. Adds enolpyruvyl to UDP-N-acetylglucosamine. Target for the antibiotic fosfomycin. Involved in heteroresistance to antibiotic fosfomycin. Heteroresistance is the ability of a clonal population to grow one or several subpopulations at a frequency of 10(-7) to 10(-3) in the presence of a higher antibiotic concentration than that predicted to be effective by measurement of the minimum inhibitory concentration (MIC). The sequence is that of UDP-N-acetylglucosamine 1-carboxyvinyltransferase from Streptococcus pneumoniae serotype 2 (strain D39 / NCTC 7466).